Here is a 257-residue protein sequence, read N- to C-terminus: MSDALIRLEQVGVSFAGEAVLDSIDLAVAPGQIVTLIGPNGAGKTTLVRAVLGLLKPHRGKVWRKPKLRIGYMPQKIQVDATLPLSVLRFLRLVPGVDRAAALSALQEVGAEQVIDSPIQTISGGEMQRVLLARALLREPELLVLDEPVQGVDVVGQTELYNLITRLRDRHGCGVLMVSHDLHLVMSATDQVVCLNRHVCCSGHPEQVSNDPAFVELFGQNAKSLAVYHHHHDHSHDLHGSVIAPGAHVHGEHCKHG.

The ABC transporter domain maps to 6–221 (IRLEQVGVSF…PAFVELFGQN (216 aa)). 38 to 45 (GPNGAGKT) lines the ATP pocket.

It belongs to the ABC transporter superfamily. Zinc importer (TC 3.A.1.15.5) family. The complex is composed of two ATP-binding proteins (ZnuC), two transmembrane proteins (ZnuB) and a solute-binding protein (ZnuA).

The protein localises to the cell inner membrane. It carries out the reaction Zn(2+)(out) + ATP(in) + H2O(in) = Zn(2+)(in) + ADP(in) + phosphate(in) + H(+)(in). Its function is as follows. Part of the ABC transporter complex ZnuABC involved in zinc import. Responsible for energy coupling to the transport system. The polypeptide is Zinc import ATP-binding protein ZnuC (Pseudomonas entomophila (strain L48)).